Here is a 205-residue protein sequence, read N- to C-terminus: DNA-directed RNA polymerase RPB5 homolog (205 aa).

It belongs to the archaeal RpoH/eukaryotic RPB5 RNA polymerase subunit family. Part of the viral DNA-directed RNA polymerase that consists of 8 polII-like subunits (RPB1, RPB2, RPB3, RPB5, RPB6, RPB7, RPB9, RPB10), a capping enzyme and a termination factor.

It localises to the host cytoplasm. The protein localises to the virion. Component of the DNA-directed RNA polymerase (RNAP) that catalyzes the transcription in the cytoplasm of viral DNA into RNA using the four ribonucleoside triphosphates as substrates. The protein is DNA-directed RNA polymerase RPB5 homolog of Ornithodoros (relapsing fever ticks).